The following is a 270-amino-acid chain: Tryptophan synthase alpha chain (270 aa).

Active-site proton acceptor residues include Glu-49 and Asp-60.

The protein belongs to the TrpA family. As to quaternary structure, tetramer of two alpha and two beta chains.

The enzyme catalyses (1S,2R)-1-C-(indol-3-yl)glycerol 3-phosphate + L-serine = D-glyceraldehyde 3-phosphate + L-tryptophan + H2O. Its pathway is amino-acid biosynthesis; L-tryptophan biosynthesis; L-tryptophan from chorismate: step 5/5. The alpha subunit is responsible for the aldol cleavage of indoleglycerol phosphate to indole and glyceraldehyde 3-phosphate. The sequence is that of Tryptophan synthase alpha chain from Gluconobacter oxydans (strain 621H) (Gluconobacter suboxydans).